Consider the following 248-residue polypeptide: Gamma-glutamyl peptidase 2 (248 aa).

The 196-residue stretch at 17–212 (SEFVKEMYGG…IDRVHKIKFV (196 aa)) folds into the Glutamine amidotransferase type-1 domain. Catalysis depends on Cys-101, which acts as the Nucleophile. Active-site residues include His-191 and Glu-193.

This sequence belongs to the peptidase C26 family.

Its subcellular location is the cytoplasm. The protein resides in the cytosol. The catalysed reaction is an S-[(1E)-1-(hydroxyimino)-omega-(methylsulfanyl)alkyl]-L-glutathione + H2O = an S-[(1E)-1-(hydroxyimino)-omega-(methylsulfanyl)alkyl]-L-cysteinylglycine + L-glutamate. The enzyme catalyses (E)-1-(glutathione-S-yl)-2-(1H-indol-3-yl)acetohydroximate + H2O = (E)-1-(glycyl-L-cystein-S-yl)-2-(1H-indol-3-yl)acetohydroximate + L-glutamate. It carries out the reaction 2-(glutathion-S-yl)-2-(1H-indol-3-yl)acetonitrile + H2O = 2-(glycyl-L-cystein-S-yl)-2-(1H-indol-3-yl)acetonitrile + L-glutamate. It catalyses the reaction (Z)-1-(glutathione-S-yl)-2-phenylacetohydroximate + H2O = (Z)-1-(glycyl-L-cystein-S-yl)-2-phenylacetohydroximate + L-glutamate. It participates in secondary metabolite biosynthesis. In terms of biological role, involved in glucosinolate biosynthesis. Hydrolyzes the gamma-glutamyl peptide bond of several glutathione (GSH) conjugates to produce Cys-Gly conjugates related to glucosinolates. The gamma-Glu-Cys-Gly-GSH conjugates are the sulfur-donating molecule in glucosinolate biosynthesis. This Arabidopsis thaliana (Mouse-ear cress) protein is Gamma-glutamyl peptidase 2.